Reading from the N-terminus, the 273-residue chain is SPRY domain-containing SOCS box protein 1 (273 aa).

At Tyr31 the chain carries Phosphotyrosine. The B30.2/SPRY domain occupies 33–231 (KPTRLDLLLD…IRMRYLNGLD (199 aa)). One can recognise an SOCS box domain in the interval 232-273 (PEPLPLMDLCRRSVRLALGKGRLGEIHALPLPASLKAYLLYQ).

This sequence belongs to the SPSB family. Component of the probable ECS(SPSB1) E3 ubiquitin-protein ligase complex which contains CUL5, RNF7/RBX2, Elongin BC complex and SPSB1. Interacts with CUL5, RNF7, ELOB and ELOC. Directly interacts with MET tyrosine kinase domain in the presence and in the absence of HGF, however HGF treatment has a positive effect on this interaction. When phosphorylated, interacts with RASA1 without affecting its stability. Interacts (via B30.2/SPRY domain) with PAWR; this interaction is direct and occurs in association with the Elongin BC complex. Interacts with NOS2 and EPHB2.

It is found in the cytoplasm. The protein resides in the cytosol. It participates in protein modification; protein ubiquitination. In terms of biological role, substrate recognition component of a SCF-like ECS (Elongin BC-CUL2/5-SOCS-box protein) E3 ubiquitin-protein ligase complex which mediates the ubiquitination and subsequent proteasomal degradation of target proteins. Negatively regulates nitric oxide (NO) production and limits cellular toxicity in activated macrophages by mediating the ubiquitination and proteasomal degradation of NOS2. Acts as a bridge which links NOS2 with the ECS E3 ubiquitin ligase complex components ELOC and CUL5. The polypeptide is SPRY domain-containing SOCS box protein 1 (SPSB1) (Bos taurus (Bovine)).